A 305-amino-acid polypeptide reads, in one-letter code: Protoheme IX farnesyltransferase 1 (305 aa).

Helical transmembrane passes span 22 to 42, 53 to 73, 94 to 114, 115 to 135, 154 to 174, 179 to 199, 230 to 250, and 283 to 303; these read IKTG…TLAL, IPEI…AGAF, VTGD…TIFG, LVFL…GLFL, IGSV…YPDV, IIGL…AIAI, LVIL…LMLV, and LFHM…GIFF.

The protein belongs to the UbiA prenyltransferase family. Protoheme IX farnesyltransferase subfamily. Interacts with CtaA.

It localises to the cell membrane. It catalyses the reaction heme b + (2E,6E)-farnesyl diphosphate + H2O = Fe(II)-heme o + diphosphate. Its pathway is porphyrin-containing compound metabolism; heme O biosynthesis; heme O from protoheme: step 1/1. In terms of biological role, converts heme B (protoheme IX) to heme O by substitution of the vinyl group on carbon 2 of heme B porphyrin ring with a hydroxyethyl farnesyl side group. This Bacillus cytotoxicus (strain DSM 22905 / CIP 110041 / 391-98 / NVH 391-98) protein is Protoheme IX farnesyltransferase 1.